A 141-amino-acid chain; its full sequence is Large ribosomal subunit protein uL11 (141 aa).

The protein belongs to the universal ribosomal protein uL11 family. As to quaternary structure, part of the ribosomal stalk of the 50S ribosomal subunit. Interacts with L10 and the large rRNA to form the base of the stalk. L10 forms an elongated spine to which L12 dimers bind in a sequential fashion forming a multimeric L10(L12)X complex. Post-translationally, one or more lysine residues are methylated.

Its function is as follows. Forms part of the ribosomal stalk which helps the ribosome interact with GTP-bound translation factors. This is Large ribosomal subunit protein uL11 from Chlorobium phaeobacteroides (strain DSM 266 / SMG 266 / 2430).